The following is an 806-amino-acid chain: MHALRALDTLCENMEYNFRALEEKWAPIWERDRLFEVDENDSETPRKYVLDMFSYPSGDLHMGHAETYAYGDFIARYWRHRGYNVLHPVGWDSFGLPAENAAIKHGSDPKVWTYRNIDQQARSMRLYAASFDWSRRLHTSDPEYYRWNQWLFLKLYKHGLAYRKKAWVNWDPSDRTVLANEQVLPDGTSERSGALVVKKKLTQWFLRITAYADRLLDDLSMLENNWPERVITMQRNWIGRSEGVSIEFNIPTLKRPVMVFTTRPETIFGVTYLALAFDSEVTEELASKSGVLGELLELRHNIDKTHESVRGLDLKSFAIHPLTGQSIPIFAASYILSDYAKGAVMSVPGHDTRDERFAVRYNLPIVKIMEDNRLISSGKYSGQSVTQARENITRDLCAKSLGRREISYRLRDWLISRQRYWGTPIPILYDSNGSEIPVEEDDLPVLLPDSEGIDLTPSGLSPLGGIHDWVNLHKAGSLFRRDTDTMDTFFDSSWYFLRYLNPDCDTAPFTLEKAKKWGPVDQYCGGVEHAVLHLLYARFITKFLYDIGFVDFKEPFLRLINQGMVVLNGAKMSKSKGNIVEFSKEVSQHGVDVIRFALIFSGPPEEDIDWKDVSMTGAARFLSRCIQTAKEVPKRTADLSLGDIELRKHTHSLLNDIDWLVDSYRFNVIAARLMDLLNITRKKIQTIGADNPAIREAIETIAIALDMFSPYTAEEMWEILGNKYSVSKALFPEVDTTFLEQKTTCAIVQIDGRLRGRLNVLTNITTEQLVHSARSLPAIEHALSGRSVKRVICVPPKLVNFVVEPK.

The 'HIGH' region motif lies at serine 54 to histidine 64. The short motif at lysine 571–serine 575 is the 'KMSKS' region element. Lysine 574 is an ATP binding site.

The protein belongs to the class-I aminoacyl-tRNA synthetase family.

The protein resides in the cytoplasm. The enzyme catalyses tRNA(Leu) + L-leucine + ATP = L-leucyl-tRNA(Leu) + AMP + diphosphate. The protein is Leucine--tRNA ligase of Tropheryma whipplei (strain TW08/27) (Whipple's bacillus).